The chain runs to 626 residues: DNA (cytosine-5)-methyltransferase DRM2 (626 aa).

2 UBA domains span residues 59–101 (GFSD…ISKY) and 109–150 (SSKS…LLSC). Residues 160–187 (VEEEDGIDWSSSDDDTNYTDMLNSDDEK) show a composition bias toward acidic residues. 2 disordered regions span residues 160–196 (VEEE…ENGS) and 245–282 (TEHE…PNPM). The UBA 3 domain maps to 190 to 232 (NSNENGSKIRSLVKMGFSELEASLAVERCGENVDIAELTDFLC). Residues 262–276 (ESKGEPRSSVDDEPI) are compositionally biased toward basic and acidic residues. The region spanning 295 to 626 (THRSLPELAR…EVVRARMRGS (332 aa)) is the SAM-dependent MTase DRM-type domain.

Belongs to the class I-like SAM-binding methyltransferase superfamily. DRM-methyltransferase family. In terms of assembly, interacts with RDM1. Expressed in roots, inflorescences and at lower levels in leaves.

Its subcellular location is the nucleus. The protein resides in the nucleoplasm. It catalyses the reaction a 2'-deoxycytidine in DNA + S-adenosyl-L-methionine = a 5-methyl-2'-deoxycytidine in DNA + S-adenosyl-L-homocysteine + H(+). In terms of biological role, involved in de novo DNA methylation. Controls asymmetric and CpNpG methylation. Required for FWA gene silencing but not for the maintenance of SUP gene silencing. Functionally redundant to CMT3 to maintain non-CpG methylation. Involved in RNA-directed DNA methylation (RdDM). Acts as major DNA methyltransferase in the RdDM pathway, and is essential for RNA-directed de novo DNA methylation of cytosines in all sequence contexts. Associates with long non-coding RNA (lncRNA) produced by RNA polymerase V (Pol V). This association is dependent on AGO4 and IDN2, and results in DNA methylation of RdDM target loci. In Arabidopsis thaliana (Mouse-ear cress), this protein is DNA (cytosine-5)-methyltransferase DRM2 (DRM2).